A 120-amino-acid polypeptide reads, in one-letter code: NAD(P)H-quinone oxidoreductase subunit 3 (120 aa).

3 helical membrane passes run 10–30 (FLGF…TNLI), 64–84 (MFAL…PWAV), and 89–109 (LGLL…IALA).

This sequence belongs to the complex I subunit 3 family. As to quaternary structure, NDH-1 can be composed of about 15 different subunits; different subcomplexes with different compositions have been identified which probably have different functions.

It localises to the cellular thylakoid membrane. It catalyses the reaction a plastoquinone + NADH + (n+1) H(+)(in) = a plastoquinol + NAD(+) + n H(+)(out). It carries out the reaction a plastoquinone + NADPH + (n+1) H(+)(in) = a plastoquinol + NADP(+) + n H(+)(out). NDH-1 shuttles electrons from an unknown electron donor, via FMN and iron-sulfur (Fe-S) centers, to quinones in the respiratory and/or the photosynthetic chain. The immediate electron acceptor for the enzyme in this species is believed to be plastoquinone. Couples the redox reaction to proton translocation, and thus conserves the redox energy in a proton gradient. Cyanobacterial NDH-1 also plays a role in inorganic carbon-concentration. This is NAD(P)H-quinone oxidoreductase subunit 3 from Prochlorococcus marinus (strain MIT 9515).